The following is a 244-amino-acid chain: Probable transcriptional regulatory protein XF_1906 (244 aa).

Belongs to the TACO1 family.

The protein resides in the cytoplasm. The chain is Probable transcriptional regulatory protein XF_1906 from Xylella fastidiosa (strain 9a5c).